Here is a 251-residue protein sequence, read N- to C-terminus: 5'-nucleotidase SurE (251 aa).

4 residues coordinate a divalent metal cation: Asp-8, Asp-9, Ser-39, and Asn-91.

The protein belongs to the SurE nucleotidase family. A divalent metal cation is required as a cofactor.

It is found in the cytoplasm. It carries out the reaction a ribonucleoside 5'-phosphate + H2O = a ribonucleoside + phosphate. Nucleotidase that shows phosphatase activity on nucleoside 5'-monophosphates. This chain is 5'-nucleotidase SurE, found in Nitrosococcus oceani (strain ATCC 19707 / BCRC 17464 / JCM 30415 / NCIMB 11848 / C-107).